The following is a 165-amino-acid chain: Large ribosomal subunit protein uL10 (165 aa).

The protein belongs to the universal ribosomal protein uL10 family. Part of the ribosomal stalk of the 50S ribosomal subunit. The N-terminus interacts with L11 and the large rRNA to form the base of the stalk. The C-terminus forms an elongated spine to which L12 dimers bind in a sequential fashion forming a multimeric L10(L12)X complex.

In terms of biological role, forms part of the ribosomal stalk, playing a central role in the interaction of the ribosome with GTP-bound translation factors. In Serratia proteamaculans (strain 568), this protein is Large ribosomal subunit protein uL10.